The chain runs to 298 residues: Ribosomal protein L11 methyltransferase (298 aa).

Residues T139, G163, D185, and N232 each coordinate S-adenosyl-L-methionine.

This sequence belongs to the methyltransferase superfamily. PrmA family.

Its subcellular location is the cytoplasm. It carries out the reaction L-lysyl-[protein] + 3 S-adenosyl-L-methionine = N(6),N(6),N(6)-trimethyl-L-lysyl-[protein] + 3 S-adenosyl-L-homocysteine + 3 H(+). Functionally, methylates ribosomal protein L11. The sequence is that of Ribosomal protein L11 methyltransferase from Microcystis aeruginosa (strain NIES-843 / IAM M-2473).